Here is a 640-residue protein sequence, read N- to C-terminus: Probable potassium transport system protein Kup 3 (640 aa).

Low complexity predominate over residues 1 to 15 (MTVDAAATPAEAPAT). Positions 1-20 (MTVDAAATPAEAPATNGHGD) are disordered. The next 12 membrane-spanning stretches (helical) occupy residues 30 to 50 (LTLG…LYAL), 71 to 91 (VISL…VVIL), 117 to 137 (ASII…DAVI), 155 to 175 (AAFD…LFAV), 183 to 203 (VAAF…IAAF), 224 to 244 (FMLH…LAVT), 265 to 285 (WLFV…ALII), 294 to 314 (PFFL…ATVA), 363 to 383 (LLLA…ALAS), 385 to 405 (YGIS…VVIW), 410 to 430 (WSPL…LTFL), and 437 to 457 (VLEG…LMYT).

Belongs to the HAK/KUP transporter (TC 2.A.72) family.

The protein localises to the cell inner membrane. It catalyses the reaction K(+)(in) + H(+)(in) = K(+)(out) + H(+)(out). Its function is as follows. Transport of potassium into the cell. Likely operates as a K(+):H(+) symporter. In Bradyrhizobium sp. (strain BTAi1 / ATCC BAA-1182), this protein is Probable potassium transport system protein Kup 3.